Consider the following 388-residue polypeptide: DNA primase small subunit PriS (388 aa).

Catalysis depends on residues aspartate 100, aspartate 102, and aspartate 288.

The protein belongs to the eukaryotic-type primase small subunit family. As to quaternary structure, heterodimer of a small subunit (PriS) and a large subunit (PriL). Mg(2+) is required as a cofactor. The cofactor is Mn(2+).

Functionally, catalytic subunit of DNA primase, an RNA polymerase that catalyzes the synthesis of short RNA molecules used as primers for DNA polymerase during DNA replication. The small subunit contains the primase catalytic core and has DNA synthesis activity on its own. Binding to the large subunit stabilizes and modulates the activity, increasing the rate of DNA synthesis while decreasing the length of the DNA fragments, and conferring RNA synthesis capability. The DNA polymerase activity may enable DNA primase to also catalyze primer extension after primer synthesis. May also play a role in DNA repair. The sequence is that of DNA primase small subunit PriS from Methanospirillum hungatei JF-1 (strain ATCC 27890 / DSM 864 / NBRC 100397 / JF-1).